A 545-amino-acid chain; its full sequence is MAKQLVFDEHARRSLERGVNAVANAVKVTLGPRGRNVVIEKKFGSPTITKDGVTVAKEVELEDKLENIGAQLLKEIASKTNDITGDGTTTATVLGQAIVKEGLRNVAAGANPLALKRGIEKAVAAATEEIKKLAVPVEDSNAIKKVAGISANDAQVGEEIANAMDKVGKEGVITIEESKSFDTEVDVVEGMQFDKGYISPYFITNPDKMEAVLEDAYILINEKKISALKDLLPVLEKVAQTSRPLLIIAEDVEGEALATLIVNKLRGTLNIAAVKAPGFGDRRKEMLRDIAAVTGGQVVSEDLGHRLENVTLDMLGRAKRIRITKDETTIIDGMGNQAEIDARVNAIKAELETTDSDYAREKLQERLAKLAGGVAVIRVGAATETELKEKKHRYEDALSTARSAVEEGIVAGGGTTLLRVIPAVKQLAESLEGDEATGARILVRALEEPARQIAANAGDEGSVIVNAVLNSDKPRYGYNAATGEFVDDMVAAGIVDPAKVTRTALQNAASIGGLILTTEAIVSDKPEKEKAPAAAGAPDMGGMDF.

ATP contacts are provided by residues 29-32 (TLGP), lysine 50, 86-90 (DGTTT), glycine 413, 479-481 (NAA), and aspartate 496. A disordered region spans residues 525–545 (KPEKEKAPAAAGAPDMGGMDF). Over residues 532 to 545 (PAAAGAPDMGGMDF) the composition is skewed to low complexity.

Belongs to the chaperonin (HSP60) family. Forms a cylinder of 14 subunits composed of two heptameric rings stacked back-to-back. Interacts with the co-chaperonin GroES.

The protein resides in the cytoplasm. The catalysed reaction is ATP + H2O + a folded polypeptide = ADP + phosphate + an unfolded polypeptide.. In terms of biological role, together with its co-chaperonin GroES, plays an essential role in assisting protein folding. The GroEL-GroES system forms a nano-cage that allows encapsulation of the non-native substrate proteins and provides a physical environment optimized to promote and accelerate protein folding. This is Chaperonin GroEL from Deinococcus geothermalis (strain DSM 11300 / CIP 105573 / AG-3a).